An 80-amino-acid polypeptide reads, in one-letter code: Exodeoxyribonuclease 7 small subunit (80 aa).

The protein belongs to the XseB family. In terms of assembly, heterooligomer composed of large and small subunits.

It localises to the cytoplasm. It carries out the reaction Exonucleolytic cleavage in either 5'- to 3'- or 3'- to 5'-direction to yield nucleoside 5'-phosphates.. Its function is as follows. Bidirectionally degrades single-stranded DNA into large acid-insoluble oligonucleotides, which are then degraded further into small acid-soluble oligonucleotides. This Aliivibrio fischeri (strain ATCC 700601 / ES114) (Vibrio fischeri) protein is Exodeoxyribonuclease 7 small subunit.